Consider the following 178-residue polypeptide: Fatty-acid and retinol-binding protein 1 (178 aa).

The N-terminal stretch at 1 to 16 (MYHRLILLALVGTTMA) is a signal peptide. Coiled-coil stretches lie at residues 67–89 (DAAL…ELRN) and 130–153 (KQAA…ELKV).

It belongs to the fatty-acid and retinol-binding protein (FARBP) family. Post-translationally, not glycosylated.

The protein resides in the secreted. In terms of biological role, binds retinol. Also binds the fluorescent fatty acid 11-((5-dimethylaminonaphthalene-1-sulfonyl)amino)undecanoic acid (DAUDA). The long chain fatty acid oleic acid can act competitively to displace bound DAUDA and retinol. In Brugia malayi (Filarial nematode worm), this protein is Fatty-acid and retinol-binding protein 1.